Reading from the N-terminus, the 311-residue chain is MENQSSISEFFLRGISAPPEQQQSLFGIFLCMYLVTLTGNLLIILAIGSDLHLHTPMYFFLANLSFVDMGLTSSTVTKMLVNIQTRHHTISYTGCLTQMYFFLMFGDLDSFFLAAMAYDRYVAICHPLCYSTVMRPQVCALMLALCWVLTNIVALTHTFLMARLSFCVTGEIAHFFCDITPVLKLSCSDTHINEMMVFVLGGTVLIVPFLCIVTSYIHIVPAILRVRTRGGVGKAFSTCSSHLCVVCVFYGTLFSAYLCPPSIASEEKDIAAAAMYTIVTPMLNPFIYSLRNKDMKGALKRLFSHRSIVSS.

Topologically, residues 1–23 (MENQSSISEFFLRGISAPPEQQQ) are extracellular. An N-linked (GlcNAc...) asparagine glycan is attached at N3. A helical transmembrane segment spans residues 24–47 (SLFGIFLCMYLVTLTGNLLIILAI). The Cytoplasmic segment spans residues 48 to 55 (GSDLHLHT). The chain crosses the membrane as a helical span at residues 56–77 (PMYFFLANLSFVDMGLTSSTVT). At 78–98 (KMLVNIQTRHHTISYTGCLTQ) the chain is on the extracellular side. C95 and C187 are joined by a disulfide. Residues 99 to 118 (MYFFLMFGDLDSFFLAAMAY) form a helical membrane-spanning segment. The Cytoplasmic portion of the chain corresponds to 119 to 137 (DRYVAICHPLCYSTVMRPQ). A helical transmembrane segment spans residues 138-156 (VCALMLALCWVLTNIVALT). The Extracellular segment spans residues 157–194 (HTFLMARLSFCVTGEIAHFFCDITPVLKLSCSDTHINE). The helical transmembrane segment at 195-217 (MMVFVLGGTVLIVPFLCIVTSYI) threads the bilayer. At 218–234 (HIVPAILRVRTRGGVGK) the chain is on the cytoplasmic side. A helical transmembrane segment spans residues 235–257 (AFSTCSSHLCVVCVFYGTLFSAY). Residues 258 to 270 (LCPPSIASEEKDI) lie on the Extracellular side of the membrane. Residues 271–290 (AAAAMYTIVTPMLNPFIYSL) form a helical membrane-spanning segment. At 291–311 (RNKDMKGALKRLFSHRSIVSS) the chain is on the cytoplasmic side.

The protein belongs to the G-protein coupled receptor 1 family.

It localises to the cell membrane. Odorant receptor. The protein is Olfactory receptor 1N1 (OR1N1) of Homo sapiens (Human).